The sequence spans 156 residues: Small ribosomal subunit protein uS7 (156 aa).

Belongs to the universal ribosomal protein uS7 family. In terms of assembly, part of the 30S ribosomal subunit. Contacts proteins S9 and S11.

Functionally, one of the primary rRNA binding proteins, it binds directly to 16S rRNA where it nucleates assembly of the head domain of the 30S subunit. Is located at the subunit interface close to the decoding center, probably blocks exit of the E-site tRNA. This chain is Small ribosomal subunit protein uS7, found in Geobacillus kaustophilus (strain HTA426).